The primary structure comprises 678 residues: Protein KHNYN (678 aa).

Position 10 is a phosphoserine (S10). Disordered stretches follow at residues 222-251 (QGVR…ARGD) and 347-407 (LHNG…ARGG). Pro residues predominate over residues 355 to 367 (PRVPSPPPAPEPP). S359 is modified (phosphoserine). A compositionally biased stretch (basic and acidic residues) spans 370–388 (CGDRGDCGDRGDVGDRGDK). The region spanning 437 to 589 (LRHIVIDGSN…LGRNGPTLDE (153 aa)) is the RNase NYN domain. Positions 595–633 (ARTQGSSKAQHPSRGFAEHGKQQQGREEEKGSGGIRKTR) are disordered. The span at 610 to 633 (FAEHGKQQQGREEEKGSGGIRKTR) shows a compositional bias: basic and acidic residues.

Belongs to the N4BP1 family.

The protein is Protein KHNYN (KHNYN) of Homo sapiens (Human).